The chain runs to 821 residues: Xylosyltransferase 1 (821 aa).

The interval 1 to 121 is disordered; that stretch reads YFSHRPKEKV…PETKSDQVPK (121 aa). At 1-821 the chain is on the lumenal side; sequence YFSHRPKEKV…GAVKPDGRLR (821 aa). Over residues 9-25 the composition is skewed to basic and acidic residues; the sequence is KVRTDSNNENSVPKDFE. Over residues 27-36 the composition is skewed to polar residues; it reads VDNSNFAPRT. Composition is skewed to basic and acidic residues over residues 41–58 and 76–87; these read HQPE…ERLQ and GPKEVLPPREKA. A glycan (N-linked (GlcNAc...) asparagine) is linked at Asn90. 4 disulfide bridges follow: Cys122/Cys150, Cys166/Cys407, Cys426/Cys439, and Cys428/Cys437. UDP-alpha-D-xylose contacts are provided by residues Val198, Asp226, and 255–257; that span reads TIW. Residue Asn286 is glycosylated (N-linked (GlcNAc...) asparagine). 359–360 lines the UDP-alpha-D-xylose pocket; that stretch reads DW. UDP-alpha-D-xylose-binding positions include Ser440 and 463–464; that span reads RK. 2 cysteine pairs are disulfide-bonded: Cys540/Cys789 and Cys782/Cys795. The N-linked (GlcNAc...) asparagine glycan is linked to Asn642. The tract at residues 801-821 is disordered; it reads SSFSPDPKSELGAVKPDGRLR.

This sequence belongs to the glycosyltransferase 14 family. XylT subfamily. Monomer. The cofactor is a divalent metal cation. Post-translationally, contains 7 disulfide bonds. N-glycosylated.

It localises to the golgi apparatus membrane. It catalyses the reaction UDP-alpha-D-xylose + L-seryl-[protein] = 3-O-(beta-D-xylosyl)-L-seryl-[protein] + UDP + H(+). It participates in glycan metabolism; chondroitin sulfate biosynthesis. It functions in the pathway glycan metabolism; heparan sulfate biosynthesis. Its function is as follows. Catalyzes the first step in the biosynthesis of chondroitin sulfate and dermatan sulfate proteoglycans, such as DCN. Transfers D-xylose from UDP-D-xylose to specific serine residues of the core protein. Required for normal maturation of chondrocytes during bone development, normal onset of ossification and normal embryonic and postnatal skeleton development, especially of the long bones. The sequence is that of Xylosyltransferase 1 (Xylt1) from Rattus norvegicus (Rat).